Reading from the N-terminus, the 267-residue chain is Tryptophan synthase alpha chain (267 aa).

Active-site proton acceptor residues include Glu49 and Asp60.

This sequence belongs to the TrpA family. Tetramer of two alpha and two beta chains.

The enzyme catalyses (1S,2R)-1-C-(indol-3-yl)glycerol 3-phosphate + L-serine = D-glyceraldehyde 3-phosphate + L-tryptophan + H2O. It functions in the pathway amino-acid biosynthesis; L-tryptophan biosynthesis; L-tryptophan from chorismate: step 5/5. The alpha subunit is responsible for the aldol cleavage of indoleglycerol phosphate to indole and glyceraldehyde 3-phosphate. In Solibacter usitatus (strain Ellin6076), this protein is Tryptophan synthase alpha chain.